A 340-amino-acid polypeptide reads, in one-letter code: GTP 3',8-cyclase (340 aa).

One can recognise a Radical SAM core domain in the interval 20–246 (RFERQYVYLR…PKALSDGPAK (227 aa)). Residue R29 coordinates GTP. Residues C36 and C40 each contribute to the [4Fe-4S] cluster site. Y42 contributes to the S-adenosyl-L-methionine binding site. C43 contacts [4Fe-4S] cluster. R79 is a GTP binding site. G83 contributes to the S-adenosyl-L-methionine binding site. Position 110 (T110) interacts with GTP. S134 lines the S-adenosyl-L-methionine pocket. GTP is bound at residue K171. M205 contacts S-adenosyl-L-methionine. Residues C268 and C271 each contribute to the [4Fe-4S] cluster site. 273–275 (RLR) lines the GTP pocket. C285 contributes to the [4Fe-4S] cluster binding site.

Belongs to the radical SAM superfamily. MoaA family. In terms of assembly, monomer and homodimer. The cofactor is [4Fe-4S] cluster.

It catalyses the reaction GTP + AH2 + S-adenosyl-L-methionine = (8S)-3',8-cyclo-7,8-dihydroguanosine 5'-triphosphate + 5'-deoxyadenosine + L-methionine + A + H(+). It functions in the pathway cofactor biosynthesis; molybdopterin biosynthesis. Functionally, catalyzes the cyclization of GTP to (8S)-3',8-cyclo-7,8-dihydroguanosine 5'-triphosphate. The polypeptide is GTP 3',8-cyclase (Actinobacillus pleuropneumoniae serotype 3 (strain JL03)).